The sequence spans 91 residues: Islet amyloid polypeptide (91 aa).

An N-terminal signal peptide occupies residues 1–22; it reads MGILKLPVVLIVLCVALNHLEG. The propeptide occupies 23–33; it reads GGKPTESHQME. A disulfide bridge links Cys37 with Cys42. Residue Tyr72 is modified to Tyrosine amide. The propeptide occupies 78–91; the sequence is VEILKREPLSYLPI.

It belongs to the calcitonin family. In terms of assembly, can form homodimers. Interacts with IDE and INS. Interaction with INS inhibits homodimerization and fibril formation.

It is found in the secreted. Functionally, amylin/IAPP is a glucoregulatory peptide hormone that plays an important role in the regulation of energy homeostasis. Selectively inhibits insulin-stimulated glucose utilization and glycogen deposition in muscle, while not affecting adipocyte glucose metabolism. IAPP function is mediated by the CALCR-RAMPs (AMYRs) receptor complexes. Amylin can also bind CALCR receptor in the absence of RAMPs, although it is more selective for AMYRs. This Bos taurus (Bovine) protein is Islet amyloid polypeptide (IAPP).